Consider the following 201-residue polypeptide: UPF0056 membrane protein PYRAB13050 (201 aa).

Helical transmembrane passes span 8-28 (FAVL…VPIF), 49-69 (ITVL…FKFF), 73-93 (VDAF…EMLS), 111-131 (VAVI…TTVM), 140-160 (PIVI…LASG), and 181-201 (LILT…AFGI).

The protein belongs to the UPF0056 (MarC) family.

Its subcellular location is the cell membrane. The polypeptide is UPF0056 membrane protein PYRAB13050 (Pyrococcus abyssi (strain GE5 / Orsay)).